The following is a 1288-amino-acid chain: Disease resistance protein RRS1 (1288 aa).

Residues 5 to 146 (EKDEEFVCIS…EIVRDVYETH (142 aa)) form the TIR domain. The interval 25-26 (SH) is important for interaction with RPS4. Residues 170–421 (IGIRCVGIWG…LLEGCGFFPH (252 aa)) form the NB-ARC domain. Residue 179-186 (GMPGIGKT) coordinates ATP. LRR repeat units lie at residues 498 to 522 (SEEIEGLFLDTSNLRFDLQPSAFKN), 535 to 553 (NPEVHPVINFPTGSLHSLP), 554 to 575 (NELRLLHWENYPLKSLPQNFDP), 577 to 598 (HLVEINMPYSQLQKLWGGTKNL), 621 to 646 (AENLEVIDLQGCTRLQNFPAAGRLLR), 665 to 688 (PPNIEKLHLQGTGILALPVSTVKP), 697 to 720 (LTEIPGLSEELERLTSLLESNSSC), 740 to 764 (LPNMANLDLNVLDLSGCSSLNSIQG), 766 to 791 (PRFLKQLYLGGTAIREVPQLPQSLEI), 792 to 807 (LNAHGSCLRSLPNMAN), 808 to 829 (LEFLKVLDLSGCSELETIQGFP), and 830 to 852 (RNLKELYFAGTTLREVPQLPLSL). The Nuclear localization signal motif lies at 986-1003 (RKFHCWAPWQVVPKVRKD). A DNA-binding region (WRKY) is located at residues 1202 to 1270 (IPAIDEGDLW…YLSEHNHPRP (69 aa)). Residues 1267–1288 (HPRPTKRKALADSTRSTSSSIC) are disordered. The span at 1279 to 1288 (STRSTSSSIC) shows a compositional bias: polar residues.

This sequence belongs to the disease resistance TIR-NB-LRR family. In terms of assembly, interacts with PopP2, a R.solanacearum type III effector. Interacts with RPS4.

The protein resides in the nucleus. Its subcellular location is the cytoplasm. Its function is as follows. Transcription factor. Interacts specifically with the W box (5'-(T)TGAC[CT]-3'), a frequently occurring elicitor-responsive cis-acting element. Also acts as a disease resistance protein involved in resistance to fungal and bacterial pathogens, including R.solanacearum, P.syringae pv. tomato and C.higginsianum. Heterodimerization with RPS4 is required to form a functional complex to recognize AvrRps4 and PopP2. Contributes to temperature-conditioned RPS4 auto-immunity. The sequence is that of Disease resistance protein RRS1 from Arabidopsis thaliana (Mouse-ear cress).